The chain runs to 250 residues: uncharacterized protein (250 aa).

To Synechocystis PCC 6803 sll0249.

This is an uncharacterized protein from Nostoc sp. (strain PCC 7120 / SAG 25.82 / UTEX 2576).